Consider the following 88-residue polypeptide: Defensin-like protein 267 (88 aa).

The N-terminal stretch at 1–23 (MMLSKVVLLALLLSLSCLWVAKA) is a signal peptide. Disulfide bonds link Cys-45/Cys-63, Cys-51/Cys-68, and Cys-55/Cys-70.

It belongs to the DEFL family.

The protein resides in the secreted. The chain is Defensin-like protein 267 from Arabidopsis thaliana (Mouse-ear cress).